The following is a 166-amino-acid chain: Small ribosomal subunit protein uS5 (166 aa).

The S5 DRBM domain maps to 11-74; sequence LQEKLIAVNR…EKARRNMMNV (64 aa).

The protein belongs to the universal ribosomal protein uS5 family. As to quaternary structure, part of the 30S ribosomal subunit. Contacts proteins S4 and S8.

Functionally, with S4 and S12 plays an important role in translational accuracy. Its function is as follows. Located at the back of the 30S subunit body where it stabilizes the conformation of the head with respect to the body. The polypeptide is Small ribosomal subunit protein uS5 (Sodalis glossinidius (strain morsitans)).